We begin with the raw amino-acid sequence, 152 residues long: RxLR effector protein Avrblb1 (152 aa).

Positions 1-24 (MRSLLLTVLLNLVVLLATTGAVSS) are cleaved as a signal peptide. The short motif at 51 to 72 (RSLRGDYNNEVTKEPNTSDEER) is the RxLR-dEER element. Residues 54–56 (RGD) carry the RGD RLK-binding motif motif. The N-linked (GlcNAc...) asparagine glycan is linked to asparagine 66. The segment at 99 to 152 (QSKTVLRYEDKLFTALYKSGETPRSLRTKHLDKASASVFFNRFKKWYDKNVGPS) is w motif.

Belongs to the RxLR effector family. In terms of assembly, interacts with host defense protein RGA2/Rpi-blb1. Interacts with host legume-type lectin receptor kinase LECRK19.

It is found in the secreted. Its subcellular location is the host nucleus. The protein resides in the host nucleolus. It localises to the host cell membrane. Functionally, secreted effector that acts as an elicitor of hypersensitive response (HR) specifically on plants carrying defense protein RGA2/Rpi-blb1. Enhances P.infestans colonization of plant hosts Nicotiana benthamiana and potato Solanum bulbocastanum leaves. Associates with host legume-type lectin receptor kinases and disrupts attachments between the host plasma membrane and cell wall. This Phytophthora infestans (strain T30-4) (Potato late blight agent) protein is RxLR effector protein Avrblb1.